A 459-amino-acid polypeptide reads, in one-letter code: tRNA modification GTPase MnmE (459 aa).

Residues arginine 23, glutamate 86, and arginine 125 each contribute to the (6S)-5-formyl-5,6,7,8-tetrahydrofolate site. Positions glycine 221 to tyrosine 380 constitute a TrmE-type G domain. Asparagine 231 provides a ligand contact to K(+). Residues asparagine 231–serine 236, threonine 250–threonine 256, and aspartate 275–glycine 278 each bind GTP. A Mg(2+)-binding site is contributed by serine 235. The K(+) site is built by threonine 250, isoleucine 252, and threonine 255. Threonine 256 is a binding site for Mg(2+). Residue lysine 459 coordinates (6S)-5-formyl-5,6,7,8-tetrahydrofolate.

It belongs to the TRAFAC class TrmE-Era-EngA-EngB-Septin-like GTPase superfamily. TrmE GTPase family. Homodimer. Heterotetramer of two MnmE and two MnmG subunits. K(+) is required as a cofactor.

Its subcellular location is the cytoplasm. Functionally, exhibits a very high intrinsic GTPase hydrolysis rate. Involved in the addition of a carboxymethylaminomethyl (cmnm) group at the wobble position (U34) of certain tRNAs, forming tRNA-cmnm(5)s(2)U34. This is tRNA modification GTPase MnmE from Clostridioides difficile (strain 630) (Peptoclostridium difficile).